A 302-amino-acid polypeptide reads, in one-letter code: Probable alpha-L-glutamate ligase (302 aa).

Residues Leu105–Glu288 enclose the ATP-grasp domain. ATP-binding positions include Lys142, Glu179–Phe180, Asp188, and Arg212–Asn214. Residues Asp249, Glu261, and Asn263 each coordinate Mg(2+). Mn(2+)-binding residues include Asp249, Glu261, and Asn263.

The protein belongs to the RimK family. Mg(2+) serves as cofactor. Mn(2+) is required as a cofactor.

The protein is Probable alpha-L-glutamate ligase of Legionella pneumophila (strain Paris).